Here is a 132-residue protein sequence, read N- to C-terminus: DNA-directed RNA polymerase subunit omega (132 aa).

The interval 100 to 119 (VSAEEEASHGTAGMSAEELE) is disordered.

The protein belongs to the RNA polymerase subunit omega family. In terms of assembly, the RNAP catalytic core consists of 2 alpha, 1 beta, 1 beta' and 1 omega subunit. When a sigma factor is associated with the core the holoenzyme is formed, which can initiate transcription.

The enzyme catalyses RNA(n) + a ribonucleoside 5'-triphosphate = RNA(n+1) + diphosphate. Functionally, promotes RNA polymerase assembly. Latches the N- and C-terminal regions of the beta' subunit thereby facilitating its interaction with the beta and alpha subunits. The protein is DNA-directed RNA polymerase subunit omega of Gluconacetobacter diazotrophicus (strain ATCC 49037 / DSM 5601 / CCUG 37298 / CIP 103539 / LMG 7603 / PAl5).